The following is a 424-amino-acid chain: MEDNAGDCGGMTAFALRLAKRLADVGVSSNKNLVFSPASLYAALALVAAGARGTTLDELLALLGAASLDDLEESVRRAVEVGLADESASGGPRVSDACGVWHDETLELKPAYRAAAAGTYKAVTRAANFQRQPKRSRKKINKWVSKATNKLIPEILPDGSVHVDTALVLVNAIYFKGKWSNPFPRSSTTTGKFHRLDGSSVDVPFMSSREDQYIGFHDGFTVLKLPYHHRTMKNHGDGGDTITNSSITRAILEHYGGENVGLSMYIFLPDERDGLPALVDKMAASSSSSSFLRDHRPTRRREVGDLRVPRFKVSFYSQINGVLQGMGVTAAFDAGEADLSGMAEGVDQRGGGLVVEEVFHRAVVEVNEEGTEAAASTACTIRLLSMSYPEDFVADHPFAFFVVEETSGAVLFAGHVLDPTSSSE.

An RCL region spans residues 370 to 394 (GTEAAASTACTIRLLSMSYPEDFVA).

Belongs to the serpin family.

Its function is as follows. Probable serine protease inhibitor. The chain is Serpin-Z2A from Oryza sativa subsp. japonica (Rice).